The primary structure comprises 508 residues: E3 ubiquitin-protein ligase XBAT32 (508 aa).

ANK repeat units follow at residues 50–79 (VRNS…DINL), 83–112 (RGQT…NIHR), 117–147 (NGGT…SVPN), 177–206 (GGIT…SVTQ), and 220–249 (AGST…CLAA). An RING-type zinc finger spans residues 321–372 (CAVCLERKCTVAADGCAHEFCTNCALYLSTTSITSSKTSNVTPGSVPCPLCR).

Interacts with ACS4 and ACS7. Expressed in the vascular system of primary root, vascular tissue of leaves, stems and anthers.

The enzyme catalyses S-ubiquitinyl-[E2 ubiquitin-conjugating enzyme]-L-cysteine + [acceptor protein]-L-lysine = [E2 ubiquitin-conjugating enzyme]-L-cysteine + N(6)-ubiquitinyl-[acceptor protein]-L-lysine.. The protein operates within protein modification; protein ubiquitination. Functionally, E3 ubiquitin-protein ligase that mediates ubiquitination of ACC synthases (ACS). Negatively regulates ethylene biosynthesis probably via ubiquitin-dependent degradation of ACS4 and ACS7 enzymes. Regulates lateral root formation and development by controlling ethylene production which inhibits lateral root formation at high concentration. The protein is E3 ubiquitin-protein ligase XBAT32 (XBAT32) of Arabidopsis thaliana (Mouse-ear cress).